We begin with the raw amino-acid sequence, 491 residues long: Nicotinamide phosphoribosyltransferase (491 aa).

Residue methionine 1 is modified to N-acetylmethionine. Position 188 is a phosphotyrosine (tyrosine 188). Arginine 196 is a diphosphate binding site. Aspartate 219 contributes to the beta-nicotinamide D-ribonucleotide binding site. Residues histidine 247 and arginine 311 each coordinate diphosphate. Residues 311–313 (RPD), 353–354 (GD), glycine 384, and arginine 392 each bind beta-nicotinamide D-ribonucleotide. Serine 472 is modified (phosphoserine).

Belongs to the NAPRTase family. In terms of assembly, homodimer. In terms of tissue distribution, ubiquitously expressed in lymphoid and non-lymphoid tissues.

The protein localises to the nucleus. It is found in the cytoplasm. Its subcellular location is the secreted. It catalyses the reaction beta-nicotinamide D-ribonucleotide + diphosphate = 5-phospho-alpha-D-ribose 1-diphosphate + nicotinamide + H(+). Its pathway is cofactor biosynthesis; NAD(+) biosynthesis; nicotinamide D-ribonucleotide from 5-phospho-alpha-D-ribose 1-diphosphate and nicotinamide: step 1/1. In terms of biological role, the secreted form behaves both as a cytokine with immunomodulating properties and an adipokine with anti-diabetic properties, it has no enzymatic activity, partly because of lack of activation by ATP, which has a low level in extracellular space and plasma. Catalyzes the condensation of nicotinamide with 5-phosphoribosyl-1-pyrophosphate to yield nicotinamide mononucleotide, an intermediate in the biosynthesis of NAD. It is the rate limiting component in the mammalian NAD biosynthesis pathway. Plays a role in the modulation of circadian clock function. NAMPT-dependent oscillatory production of NAD regulates oscillation of clock target gene expression by releasing the core clock component: CLOCK-BMAL1 heterodimer from NAD-dependent SIRT1-mediated suppression. This Mus musculus (Mouse) protein is Nicotinamide phosphoribosyltransferase (Nampt).